Consider the following 831-residue polypeptide: Prolactin receptor (831 aa).

The N-terminal stretch at 1–23 is a signal peptide; sequence MKQDLISSVQIILFLPLTTVGLA. At 24 to 438 the chain is on the extracellular side; that stretch reads GQSFPGKPKI…QIPNDFRVKD (415 aa). Fibronectin type-III domains are found at residues 30–128, 129–227, 230–331, and 332–433; these read KPKI…VQPG, SPVN…IPSG, PPEK…VQPD, and PPVN…IPND. A disulfide bridge connects residues cysteine 36 and cysteine 46. Residue asparagine 59 is glycosylated (N-linked (GlcNAc...) asparagine). A disulfide bridge links cysteine 75 with cysteine 86. 8 N-linked (GlcNAc...) asparagine glycosylation sites follow: asparagine 91, asparagine 100, asparagine 112, asparagine 132, asparagine 262, asparagine 303, asparagine 315, and asparagine 335. 2 residues coordinate Zn(2+): aspartate 414 and histidine 416. The WSXWS motif motif lies at 419-423; the sequence is WSEWS. Residues 439-459 traverse the membrane as a helical segment; the sequence is MIVWIVLGVLSSLICLIMSWT. Residues 460-831 lie on the Cytoplasmic side of the membrane; the sequence is MVLKGYRMIT…DPSSFMPSFK (372 aa). Residues 471-479 carry the Box 1 motif motif; it reads MLPPVPGPK. 3 disordered regions span residues 527 to 563, 774 to 796, and 808 to 831; these read QQLM…SPSL, RVPH…QQGQ, and PSDC…PSFK. Polar residues predominate over residues 787 to 796; the sequence is ETSQSLQQGQ.

It belongs to the type I cytokine receptor family. Type 1 subfamily.

Its subcellular location is the membrane. This is a receptor for the anterior pituitary hormone prolactin. In Gallus gallus (Chicken), this protein is Prolactin receptor (PRLR).